Reading from the N-terminus, the 185-residue chain is Ribosome-recycling factor (185 aa).

This sequence belongs to the RRF family.

The protein localises to the cytoplasm. In terms of biological role, responsible for the release of ribosomes from messenger RNA at the termination of protein biosynthesis. May increase the efficiency of translation by recycling ribosomes from one round of translation to another. The chain is Ribosome-recycling factor from Xylella fastidiosa (strain 9a5c).